Reading from the N-terminus, the 301-residue chain is Heme A synthase (301 aa).

At 1 to 7 the chain is on the cytoplasmic side; it reads MHKGLKR. The helical transmembrane segment at 8–28 threads the bilayer; that stretch reads LGVITSLGVLLVLIQGALVTN. The Extracellular segment spans residues 29 to 56; sequence TGSGEGCGQTWPLCFGQVIPLDPPPETV. Residues Cys-35 and Cys-42 are joined by a disulfide bond. Residues 57–77 traverse the membrane as a helical segment; it reads IEFSHRLVAGIVGMLVILMAI. Glu-58 is an active-site residue. Residue His-61 participates in heme o binding. Over 78 to 92 the chain is Cytoplasmic; sequence WSWRRLKHMPETRFL. The helical transmembrane segment at 93–113 threads the bilayer; the sequence is AVISVFMIIFQGLLGAGAVVF. The Extracellular portion of the chain corresponds to 114–117; it reads GQSD. The helical transmembrane segment at 118-138 threads the bilayer; the sequence is LIMALHFGFSALSFASVVLLT. His-123 provides a ligand contact to heme o. At 139 to 159 the chain is on the cytoplasmic side; the sequence is RLAFEDSNPQKQYAPIVSKAY. Residues 160-180 traverse the membrane as a helical segment; it reads KGYVIFVAIYSYVAIYTGAYV. Topologically, residues 181 to 215 are extracellular; it reads KHTNATLACSGFPLCNGQWVPDVFTEAIGVQLLHR. A disulfide bridge connects residues Cys-189 and Cys-195. His-214 provides a ligand contact to heme b. A helical membrane pass occupies residues 216-236; it reads SAAILLSLLLLVLFIWTVKTF. Topologically, residues 237-240 are cytoplasmic; the sequence is RASR. Residues 241-261 traverse the membrane as a helical segment; sequence VLVVCASLAMLLVIGQAASGV. The Extracellular segment spans residues 262 to 274; it reads AVVLTYNATLTLG. The helical transmembrane segment at 275–295 threads the bilayer; that stretch reads IFHALLISLLFTLLCYMVMLV. Residue His-277 participates in heme b binding. Residues 296–301 are Cytoplasmic-facing; the sequence is TRHKAK.

It belongs to the COX15/CtaA family. Type 1 subfamily. In terms of assembly, interacts with CtaB. Heme b serves as cofactor.

It localises to the cell membrane. The enzyme catalyses Fe(II)-heme o + 2 A + H2O = Fe(II)-heme a + 2 AH2. It participates in porphyrin-containing compound metabolism; heme A biosynthesis; heme A from heme O: step 1/1. Its function is as follows. Catalyzes the conversion of heme O to heme A by two successive hydroxylations of the methyl group at C8. The first hydroxylation forms heme I, the second hydroxylation results in an unstable dihydroxymethyl group, which spontaneously dehydrates, resulting in the formyl group of heme A. The chain is Heme A synthase from Shouchella clausii (strain KSM-K16) (Alkalihalobacillus clausii).